Reading from the N-terminus, the 203-residue chain is Small ribosomal subunit protein uS4 (203 aa).

The S4 RNA-binding domain occupies 93-156 (RRLDNVVYRL…MKVPAILEAV (64 aa)).

This sequence belongs to the universal ribosomal protein uS4 family. Part of the 30S ribosomal subunit. Contacts protein S5. The interaction surface between S4 and S5 is involved in control of translational fidelity.

One of the primary rRNA binding proteins, it binds directly to 16S rRNA where it nucleates assembly of the body of the 30S subunit. Functionally, with S5 and S12 plays an important role in translational accuracy. The protein is Small ribosomal subunit protein uS4 of Streptococcus pyogenes serotype M49 (strain NZ131).